A 138-amino-acid polypeptide reads, in one-letter code: Cysteine desulfuration protein SufE (138 aa).

Residue Cys-51 is the Cysteine persulfide intermediate of the active site.

Belongs to the SufE family. Homodimer. Interacts with SufS.

The protein localises to the cytoplasm. It functions in the pathway cofactor biosynthesis; iron-sulfur cluster biosynthesis. Functionally, participates in cysteine desulfuration mediated by SufS. Cysteine desulfuration mobilizes sulfur from L-cysteine to yield L-alanine and constitutes an essential step in sulfur metabolism for biosynthesis of a variety of sulfur-containing biomolecules. Functions as a sulfur acceptor for SufS, by mediating the direct transfer of the sulfur atom from the S-sulfanylcysteine of SufS, an intermediate product of cysteine desulfuration process. This chain is Cysteine desulfuration protein SufE, found in Escherichia coli O81 (strain ED1a).